The following is a 316-amino-acid chain: Pantothenate kinase (316 aa).

95–102 serves as a coordination point for ATP; sequence GSVAVGKS.

It belongs to the prokaryotic pantothenate kinase family.

The protein localises to the cytoplasm. The enzyme catalyses (R)-pantothenate + ATP = (R)-4'-phosphopantothenate + ADP + H(+). It participates in cofactor biosynthesis; coenzyme A biosynthesis; CoA from (R)-pantothenate: step 1/5. This Erwinia tasmaniensis (strain DSM 17950 / CFBP 7177 / CIP 109463 / NCPPB 4357 / Et1/99) protein is Pantothenate kinase.